The sequence spans 272 residues: Phosphatidylglycerol--prolipoprotein diacylglyceryl transferase (272 aa).

7 helical membrane passes run 17 to 37 (LQVH…WGLA), 55 to 75 (LVFY…VLFY), 90 to 110 (VWTG…AMLF), 125 to 145 (FIAP…FIGG), 174 to 194 (PSQI…LWWF), 202 to 222 (MAVS…MEFF), and 230 to 250 (GFIL…MLLI). Residue R138 participates in a 1,2-diacyl-sn-glycero-3-phospho-(1'-sn-glycerol) binding.

Belongs to the Lgt family.

The protein localises to the cell inner membrane. The catalysed reaction is L-cysteinyl-[prolipoprotein] + a 1,2-diacyl-sn-glycero-3-phospho-(1'-sn-glycerol) = an S-1,2-diacyl-sn-glyceryl-L-cysteinyl-[prolipoprotein] + sn-glycerol 1-phosphate + H(+). It participates in protein modification; lipoprotein biosynthesis (diacylglyceryl transfer). Functionally, catalyzes the transfer of the diacylglyceryl group from phosphatidylglycerol to the sulfhydryl group of the N-terminal cysteine of a prolipoprotein, the first step in the formation of mature lipoproteins. In Acinetobacter baumannii (strain SDF), this protein is Phosphatidylglycerol--prolipoprotein diacylglyceryl transferase.